Reading from the N-terminus, the 21-residue chain is Hemolymph 65 kDa lectin BG04 (21 aa).

Hemolymph.

Its subcellular location is the secreted. In terms of biological role, binds and precipitates antigens of the parasite Echinostoma paraensei. The polypeptide is Hemolymph 65 kDa lectin BG04 (BG04) (Biomphalaria glabrata (Bloodfluke planorb)).